Here is an 86-residue protein sequence, read N- to C-terminus: Small ribosomal subunit protein bS20 (86 aa).

It belongs to the bacterial ribosomal protein bS20 family.

Its function is as follows. Binds directly to 16S ribosomal RNA. This is Small ribosomal subunit protein bS20 from Mycolicibacterium gilvum (strain PYR-GCK) (Mycobacterium gilvum (strain PYR-GCK)).